The sequence spans 133 residues: Capsid protein (133 aa).

It belongs to the Leviviricetes capsid protein family. As to quaternary structure, homodimer. The homodimers binds to the viral RNA via an operator hairpin, but also to many other RNA sequences in the viral genome; this interaction probably shifts the virus from the replicative to the assembly phase and ensures specific encapsidation of the viral genome. Interacts with the maturation protein A2.

It is found in the virion. In terms of biological role, capsid protein self-assembles to form an icosahedral capsid with a T=3 symmetry, about 26 nm in diameter, and consisting of 89 capsid proteins dimers (178 capsid proteins). Involved in viral genome encapsidation through the interaction between a capsid protein dimer and the multiple packaging signals present in the RNA genome. Binding of the capsid proteins to the viral RNA induces a conformational change required for efficient T=3 shell formation. The capsid also contains 1 copy of the A2 maturation protein. Functionally, acts as a translational repressor of viral replicase synthesis late in infection. This latter function is the result of capsid protein interaction with an RNA hairpin which contains the replicase ribosome-binding site. The chain is Capsid protein from Escherichia virus Qbeta (Bacteriophage Q-beta).